Consider the following 111-residue polypeptide: Large ribosomal subunit protein uL22 (111 aa).

It belongs to the universal ribosomal protein uL22 family. In terms of assembly, part of the 50S ribosomal subunit.

Its function is as follows. This protein binds specifically to 23S rRNA; its binding is stimulated by other ribosomal proteins, e.g. L4, L17, and L20. It is important during the early stages of 50S assembly. It makes multiple contacts with different domains of the 23S rRNA in the assembled 50S subunit and ribosome. Functionally, the globular domain of the protein is located near the polypeptide exit tunnel on the outside of the subunit, while an extended beta-hairpin is found that lines the wall of the exit tunnel in the center of the 70S ribosome. In Wigglesworthia glossinidia brevipalpis, this protein is Large ribosomal subunit protein uL22.